Consider the following 325-residue polypeptide: D-alanine--D-alanine ligase (325 aa).

An ATP-grasp domain is found at 109-309 (KRVCKERMLP…FCTLLDQLIE (201 aa)). 136 to 191 (CRRLPFPMFVKPANLGSSVGISKAHDEQELEAAFSLAKQYDRKIIVERGIEGRELE) provides a ligand contact to ATP. Mg(2+) is bound by residues Asp-262, Glu-276, and Asn-278.

Belongs to the D-alanine--D-alanine ligase family. The cofactor is Mg(2+). It depends on Mn(2+) as a cofactor.

The protein localises to the cytoplasm. The catalysed reaction is 2 D-alanine + ATP = D-alanyl-D-alanine + ADP + phosphate + H(+). Its pathway is cell wall biogenesis; peptidoglycan biosynthesis. Its function is as follows. Cell wall formation. In Solibacter usitatus (strain Ellin6076), this protein is D-alanine--D-alanine ligase.